The sequence spans 385 residues: Rubredoxin-NAD(+) reductase (385 aa).

FAD-binding positions include 8 to 11 (AGTA), 32 to 33 (SR), Ile-79, Glu-156, Asp-275, and Ile-293.

Belongs to the FAD-dependent oxidoreductase family. As to quaternary structure, homodimer. It depends on FAD as a cofactor.

The protein localises to the cytoplasm. It catalyses the reaction 2 reduced [rubredoxin] + NAD(+) + H(+) = 2 oxidized [rubredoxin] + NADH. The protein operates within hydrocarbon metabolism; alkane degradation. Involved in the hydrocarbon hydroxylating system, which transfers electrons from NADH to rubredoxin reductase and then through rubredoxin to alkane 1 monooxygenase. This Pseudomonas putida (Arthrobacter siderocapsulatus) protein is Rubredoxin-NAD(+) reductase (alkT).